A 235-amino-acid chain; its full sequence is Hydroxyacylglutathione hydrolase (235 aa).

H53, H55, D57, H58, H109, D127, and H165 together coordinate Zn(2+).

Belongs to the metallo-beta-lactamase superfamily. Glyoxalase II family. In terms of assembly, monomer. Zn(2+) is required as a cofactor.

It carries out the reaction an S-(2-hydroxyacyl)glutathione + H2O = a 2-hydroxy carboxylate + glutathione + H(+). It participates in secondary metabolite metabolism; methylglyoxal degradation; (R)-lactate from methylglyoxal: step 2/2. Thiolesterase that catalyzes the hydrolysis of S-D-lactoyl-glutathione to form glutathione and D-lactic acid. The polypeptide is Hydroxyacylglutathione hydrolase (Glaesserella parasuis serovar 5 (strain SH0165) (Haemophilus parasuis)).